The following is a 167-amino-acid chain: Small ribosomal subunit protein uS5 (167 aa).

The S5 DRBM domain maps to Leu19 to Cys82.

It belongs to the universal ribosomal protein uS5 family. Part of the 30S ribosomal subunit. Contacts proteins S4 and S8.

In terms of biological role, with S4 and S12 plays an important role in translational accuracy. Located at the back of the 30S subunit body where it stabilizes the conformation of the head with respect to the body. The chain is Small ribosomal subunit protein uS5 from Protochlamydia amoebophila (strain UWE25).